The sequence spans 650 residues: A-kinase anchor protein 10, mitochondrial (650 aa).

A mitochondrion-targeting transit peptide spans Arg1–Arg16. Disordered regions lie at residues Arg1–Thr45 and Ser168–Asp192. A Phosphoserine modification is found at Ser40. RGS domains lie at Thr113–Gln356 and Tyr366–Leu493. Ser268 is modified (phosphoserine). Positions Leu512–Gln535 are disordered. Positions Leu525–Gln535 are enriched in low complexity. A PKA-RII subunit binding region spans residues Leu622–Met635.

It is found in the mitochondrion. The protein resides in the membrane. Its subcellular location is the cytoplasm. In terms of biological role, differentially targeted protein that binds to type I and II regulatory subunits of protein kinase A and anchors them to the mitochondria or the plasma membrane. Although the physiological relevance between PKA and AKAPS with mitochondria is not fully understood, one idea is that BAD, a proapoptotic member, is phosphorylated and inactivated by mitochondria-anchored PKA. It cannot be excluded too that it may facilitate PKA as well as G protein signal transduction, by acting as an adapter for assembling multiprotein complexes. With its RGS domain, it could lead to the interaction to G-alpha proteins, providing a link between the signaling machinery and the downstream kinase. The protein is A-kinase anchor protein 10, mitochondrial (AKAP10) of Sus scrofa (Pig).